Here is a 201-residue protein sequence, read N- to C-terminus: MSRLEKIYTNKENPLKDFLDEVEQNDEEMRTVDFNPNKPALPYKKKAIVFPKNFPSETHYNNGVPIGKQLNLGGSVQQVIGGINTILEVLSFLCLRQLPIVASSSHEQLENSKEFKNELQNHLTKITEQLEINRKSIIKDQTVKEDLNKKQYETLYALQEKLLNMLAEKQSSNELKNLERRLDEKIKIIEQQLSEIKLMLS.

This is an uncharacterized protein from Soybean chlorotic mottle virus.